The primary structure comprises 109 residues: Nucleoid-associated protein ETA_24730 (109 aa).

Belongs to the YbaB/EbfC family. In terms of assembly, homodimer.

It localises to the cytoplasm. The protein resides in the nucleoid. Its function is as follows. Binds to DNA and alters its conformation. May be involved in regulation of gene expression, nucleoid organization and DNA protection. The protein is Nucleoid-associated protein ETA_24730 of Erwinia tasmaniensis (strain DSM 17950 / CFBP 7177 / CIP 109463 / NCPPB 4357 / Et1/99).